Consider the following 500-residue polypeptide: Enolase (500 aa).

Substrate-binding residues include His225 and Glu234. The active-site Proton donor is Glu277. Positions 312, 361, and 386 each coordinate Mg(2+). Residues Glu361 and Asp386 each coordinate substrate. Lys411 acts as the Proton acceptor in catalysis. Substrate is bound by residues 438-441 (SHRS) and Lys462.

This sequence belongs to the enolase family. In terms of assembly, homodimer. Mg(2+) serves as cofactor.

The protein localises to the cytoplasm. The enzyme catalyses (2R)-2-phosphoglycerate = phosphoenolpyruvate + H2O. The protein operates within carbohydrate degradation; glycolysis; pyruvate from D-glyceraldehyde 3-phosphate: step 4/5. Enzyme of the glycolytic pathway. Glycolysis is essential in glial cells but not in neurons; neurons rely on the citric acid cycle for their energy needs, and on lactate and alanine secreted into the hemolymph by glial cells to fuel it. The chain is Enolase from Drosophila melanogaster (Fruit fly).